The following is a 507-amino-acid chain: ATP synthase subunit alpha (507 aa).

Position 170–177 (G170–T177) interacts with ATP.

It belongs to the ATPase alpha/beta chains family. In terms of assembly, F-type ATPases have 2 components, CF(1) - the catalytic core - and CF(0) - the membrane proton channel. CF(1) has five subunits: alpha(3), beta(3), gamma(1), delta(1), epsilon(1). CF(0) has three main subunits: a(1), b(2) and c(9-12). The alpha and beta chains form an alternating ring which encloses part of the gamma chain. CF(1) is attached to CF(0) by a central stalk formed by the gamma and epsilon chains, while a peripheral stalk is formed by the delta and b chains.

The protein localises to the cell inner membrane. The enzyme catalyses ATP + H2O + 4 H(+)(in) = ADP + phosphate + 5 H(+)(out). Functionally, produces ATP from ADP in the presence of a proton gradient across the membrane. The alpha chain is a regulatory subunit. This Thermosipho melanesiensis (strain DSM 12029 / CIP 104789 / BI429) protein is ATP synthase subunit alpha.